Here is a 1023-residue protein sequence, read N- to C-terminus: Hemolysin, chromosomal (1023 aa).

A run of 3 helical transmembrane segments spans residues I237–N259, K267–A326, and D364–E410. Residues K563 and K689 are each lipidated (N6-myristoyl lysine). Hemolysin-type calcium-binding repeat units lie at residues F731–I748, E749–L766, S767–L784, I785–L802, S815–L832, and D833–Y850. Over residues H747–N763 the composition is skewed to basic and acidic residues. Residues H747–G780 form a disordered region.

This sequence belongs to the RTX prokaryotic toxin (TC 1.C.11) family. Post-translationally, myristoylated by HlyC; the toxin only becomes active when modified. Mainly myristoylated, while a minor fraction is acylated with pentadecanoyl (C15:0; 26%) and heptadecanoyl (C17:0; 6%) fatty acyl groups. Fatty acylation is involved in binding to host membranes and promotes the irreversible insertion of Hemolysin into the host cell membrane. Can be activated by both myristoylation and palmitoylation, but HlyC catalyzes lysine myristoylation.

It localises to the secreted. The protein localises to the host cell membrane. Functionally, bacterial hemolysins are exotoxins that attack blood cell membranes and cause cell rupture by forming a pore. This is Hemolysin, chromosomal from Escherichia coli.